A 35-amino-acid chain; its full sequence is Mu-thomitoxin-Hme1c (35 aa).

3 cysteine pairs are disulfide-bonded: Cys-2/Cys-18, Cys-9/Cys-23, and Cys-17/Cys-34.

The protein belongs to the neurotoxin 07 (Beta/delta-agtx) family. In terms of tissue distribution, expressed by the venom gland.

Its subcellular location is the secreted. In terms of biological role, gating-modifier toxin that inhibits mammalian and insect voltage-gated sodium channels. It shifts the voltage dependence of channel activation to more positive voltages. It shows potent activity on Nav1.4/SCN4A (IC(50)=103 nM), Nav1.5/SCN5A (IC(50)=268 nM) and Para/DmNav1 (IC(50)=555 nM) and lower activities on Nav1.2/SCN2A (IC(50)=1447 nM) and Nav1.6/SCN8A (IC(50)=3504 nM). In addition, at a concentration of 1 uM, the toxin inhibits 90-100% of sodium current through Nav1.2/SCN2A, Nav1.4/SCN4A, Nav1.5/SCN5A, Nav1.6/SCN8A and Para/DmNav1 channels, when the voltage of maximal activation of the channel in control conditions is applied. It binds to the S3-S4 helix-loop-helix motif in the voltage-sensing domain of repeat 1 (shown on hNav1.4/SCN4A). The toxin is amphiphilic and binds to both neutral and negatively charged lipid vesicles with high affinity. The hydrophobic face lies on the opposite side to the hydrophobic faces of classical gating modifiers. In Heriaeus mellotteei (Crab spider), this protein is Mu-thomitoxin-Hme1c.